A 65-amino-acid chain; its full sequence is Small ribosomal subunit protein bS21 (65 aa).

The protein belongs to the bacterial ribosomal protein bS21 family.

In Chlorobium chlorochromatii (strain CaD3), this protein is Small ribosomal subunit protein bS21.